Reading from the N-terminus, the 398-residue chain is Tryptophan synthase beta chain (398 aa).

N6-(pyridoxal phosphate)lysine is present on Lys92.

This sequence belongs to the TrpB family. Tetramer of two alpha and two beta chains. The cofactor is pyridoxal 5'-phosphate.

The catalysed reaction is (1S,2R)-1-C-(indol-3-yl)glycerol 3-phosphate + L-serine = D-glyceraldehyde 3-phosphate + L-tryptophan + H2O. It participates in amino-acid biosynthesis; L-tryptophan biosynthesis; L-tryptophan from chorismate: step 5/5. Functionally, the beta subunit is responsible for the synthesis of L-tryptophan from indole and L-serine. This chain is Tryptophan synthase beta chain, found in Nitrosospira multiformis (strain ATCC 25196 / NCIMB 11849 / C 71).